The primary structure comprises 256 residues: D-aminoacyl-tRNA deacylase (256 aa).

It belongs to the DtdA deacylase family. As to quaternary structure, monomer. Requires Zn(2+) as cofactor.

It catalyses the reaction a D-aminoacyl-tRNA + H2O = a tRNA + a D-alpha-amino acid + H(+). The catalysed reaction is glycyl-tRNA(Ala) + H2O = tRNA(Ala) + glycine + H(+). Functionally, D-aminoacyl-tRNA deacylase with broad substrate specificity. By recycling D-aminoacyl-tRNA to D-amino acids and free tRNA molecules, this enzyme counteracts the toxicity associated with the formation of D-aminoacyl-tRNA entities in vivo. This chain is D-aminoacyl-tRNA deacylase, found in Thermoplasma acidophilum (strain ATCC 25905 / DSM 1728 / JCM 9062 / NBRC 15155 / AMRC-C165).